Consider the following 642-residue polypeptide: DNA primase (642 aa).

The CHC2-type zinc finger occupies 41–65 (CPFHNEKSPSFHVRPNHGHFHCFGC). In terms of domain architecture, Toprim spans 262–348 (HQAVVVEGYT…AGKSFVAVAA (87 aa)). Mg(2+)-binding residues include glutamate 268, aspartate 319, and aspartate 321. The segment at 445 to 480 (NRRSVPERTRRRSVSVEQSPFMQPPGAPADQLAARP) is disordered.

The protein belongs to the DnaG primase family. In terms of assembly, monomer. Interacts with DnaB. Requires Zn(2+) as cofactor. The cofactor is Mg(2+).

It carries out the reaction ssDNA + n NTP = ssDNA/pppN(pN)n-1 hybrid + (n-1) diphosphate.. In terms of biological role, RNA polymerase that catalyzes the synthesis of short RNA molecules used as primers for DNA polymerase during DNA replication. This is DNA primase from Mycobacterium leprae (strain TN).